We begin with the raw amino-acid sequence, 500 residues long: L-arabinose isomerase (500 aa).

Mn(2+) contacts are provided by Glu-306, Glu-333, His-350, and His-450.

This sequence belongs to the arabinose isomerase family. As to quaternary structure, homohexamer. Mn(2+) is required as a cofactor.

The catalysed reaction is beta-L-arabinopyranose = L-ribulose. The protein operates within carbohydrate degradation; L-arabinose degradation via L-ribulose; D-xylulose 5-phosphate from L-arabinose (bacterial route): step 1/3. In terms of biological role, catalyzes the conversion of L-arabinose to L-ribulose. The sequence is that of L-arabinose isomerase from Salmonella typhi.